A 70-amino-acid chain; its full sequence is Cytochrome c oxidase subunit 8B, mitochondrial (70 aa).

The N-terminal 24 residues, 1-24, are a transit peptide targeting the mitochondrion; that stretch reads MPRLPPALRLLQPPLRCWVVPKLH. The Mitochondrial matrix segment spans residues 25–35; the sequence is VSAKPARTPTS. The helical transmembrane segment at 36–59 threads the bilayer; sequence PAEQAVGLSMMFLSFLVPAGWVLS. The Mitochondrial intermembrane portion of the chain corresponds to 60 to 70; that stretch reads HLESYKKSSTA.

The protein belongs to the cytochrome c oxidase VIII family. Component of the cytochrome c oxidase (complex IV, CIV), a multisubunit enzyme composed of 14 subunits. The complex is composed of a catalytic core of 3 subunits MT-CO1, MT-CO2 and MT-CO3, encoded in the mitochondrial DNA, and 11 supernumerary subunits COX4I, COX5A, COX5B, COX6A, COX6B, COX6C, COX7A, COX7B, COX7C, COX8 and NDUFA4, which are encoded in the nuclear genome. The complex exists as a monomer or a dimer and forms supercomplexes (SCs) in the inner mitochondrial membrane with NADH-ubiquinone oxidoreductase (complex I, CI) and ubiquinol-cytochrome c oxidoreductase (cytochrome b-c1 complex, complex III, CIII), resulting in different assemblies (supercomplex SCI(1)III(2)IV(1) and megacomplex MCI(2)III(2)IV(2)).

The protein localises to the mitochondrion inner membrane. The protein operates within energy metabolism; oxidative phosphorylation. Its function is as follows. Component of the cytochrome c oxidase, the last enzyme in the mitochondrial electron transport chain which drives oxidative phosphorylation. The respiratory chain contains 3 multisubunit complexes succinate dehydrogenase (complex II, CII), ubiquinol-cytochrome c oxidoreductase (cytochrome b-c1 complex, complex III, CIII) and cytochrome c oxidase (complex IV, CIV), that cooperate to transfer electrons derived from NADH and succinate to molecular oxygen, creating an electrochemical gradient over the inner membrane that drives transmembrane transport and the ATP synthase. Cytochrome c oxidase is the component of the respiratory chain that catalyzes the reduction of oxygen to water. Electrons originating from reduced cytochrome c in the intermembrane space (IMS) are transferred via the dinuclear copper A center (CU(A)) of subunit 2 and heme A of subunit 1 to the active site in subunit 1, a binuclear center (BNC) formed by heme A3 and copper B (CU(B)). The BNC reduces molecular oxygen to 2 water molecules using 4 electrons from cytochrome c in the IMS and 4 protons from the mitochondrial matrix. The protein is Cytochrome c oxidase subunit 8B, mitochondrial (COX8B) of Eulemur fulvus fulvus (Brown lemur).